Reading from the N-terminus, the 478-residue chain is Nuclear distribution protein PAC1 (478 aa).

Positions 9–41 (QAEELHKAMIAYLLSANLPKSAAALREELADSV) constitute a LisH domain. Positions 60–87 (TSVVRLQKKIMDLESRNNALQSELDSAT) form a coiled coil. WD repeat units follow at residues 113–154 (SHRE…RTIK), 156–196 (HTKA…KNIR), 200–247 (GHDH…CVKT), 250–289 (GHVD…TKST), 292–352 (GHEH…IKTL), 354–393 (GHDN…KCVR), 398–439 (AHGH…AASA), and 440–477 (INGV…RVFA).

The protein belongs to the WD repeat LIS1/nudF family. Self-associates. Interacts with NDL1 and dynein.

It localises to the cytoplasm. The protein resides in the cytoskeleton. The protein localises to the spindle pole. Its function is as follows. Positively regulates the activity of the minus-end directed microtubule motor protein dynein. May enhance dynein-mediated microtubule sliding by targeting dynein to the microtubule plus end. Required for nuclear migration during vegetative growth as well as development. Required for retrograde early endosome (EE) transport from the hyphal tip. Required for localization of dynein to the mitotic spindle poles. Recruits additional proteins to the dynein complex at SPBs. This Paracoccidioides brasiliensis (strain Pb18) protein is Nuclear distribution protein PAC1.